We begin with the raw amino-acid sequence, 288 residues long: GDSL esterase/lipase At3g43550 (288 aa).

An N-terminal signal peptide occupies residues 1 to 19 (MKLQIIWLALVLIAVETYA). Residue N25 is glycosylated (N-linked (GlcNAc...) asparagine). Residue S37 is the Nucleophile of the active site.

This sequence belongs to the 'GDSL' lipolytic enzyme family.

The protein localises to the secreted. This is GDSL esterase/lipase At3g43550 from Arabidopsis thaliana (Mouse-ear cress).